The sequence spans 817 residues: Kinesin-like protein 2 (817 aa).

Residues 1 to 155 form a disordered region; that stretch reads MEEEGHKSLT…YNDEKSVNAS (155 aa). The segment covering 8–23 has biased composition (low complexity); sequence SLTSHLPQSSSSLSQS. Over residues 39-60 the composition is skewed to polar residues; that stretch reads IKTNSSSSNILKPRLSLQNEVN. Residues 76–86 are compositionally biased toward low complexity; the sequence is SLASVKSSSLA. Polar residues predominate over residues 106–116; sequence PISSRSVSASS. Low complexity predominate over residues 122-132; it reads ASAVSSSLNSS. Positions 155-242 form a coiled coil; sequence SALRTTEDRL…VSQKGMESLE (88 aa). The ATP site is built by Asn-473, Arg-475, Arg-479, Glu-543, Gly-566, Ser-567, Gly-568, Lys-569, Thr-570, and Thr-778. A Kinesin motor domain is found at 473-807; that stretch reads NIRVFCRVRP…LRFATKVNNT (335 aa).

It belongs to the TRAFAC class myosin-kinesin ATPase superfamily. Kinesin family. NCD subfamily.

It localises to the cytoplasm. The protein localises to the cytoskeleton. Its subcellular location is the spindle. The protein resides in the nucleus. The enzyme catalyses ATP + H2O = ADP + phosphate + H(+). It catalyses the reaction ATP + H2O + a kinesin associated with a microtubule at position (n) = ADP + phosphate + a kinesin associated with a microtubule at position (n-1, toward the minus end).. Functionally, minus end-directed microtubule (MT) motor that is involved in spindle microtubule shortening, kinetochore capture, and polarization of cytoplasmic microtubules. During mitosis, promotes spindle microtubule shortening by depolymerization. During metaphase, involved in the recapture of kinetochores displaced from the spindle and their transport towards the spindle pole body; promotes transport both by microtubule end-on pulling and by lateral sliding along the side of the microtubule. During interphase, required for the polarization of cytoplasmic microtubules where it orients the microtubule plus ends toward the cell ends and the minus ends toward the cell center. Required for karyogamy. This is Kinesin-like protein 2 from Schizosaccharomyces pombe (strain 972 / ATCC 24843) (Fission yeast).